The following is a 601-amino-acid chain: Tubulin polyglutamylase ttll-4 (601 aa).

Over residues 1-18 (MSSGYSSAPSVSHTSSDT) the composition is skewed to polar residues. The tract at residues 1–37 (MSSGYSSAPSVSHTSSDTDLNRIDSYDDGAEETTDEQ) is disordered. The TTL domain occupies 138–476 (QARLTWCHNS…YVPPSFDKLS (339 aa)). ATP is bound by residues Lys254, 260-261 (RG), 282-285 (QHYI), and 295-297 (KFD). Arg260 contributes to the a protein binding site. Arg321 is a binding site for L-glutamate. 342 to 343 (TN) is a binding site for ATP. L-glutamate contacts are provided by Tyr344, Ser345, and Lys362. Mg(2+) contacts are provided by Asp422, Glu435, and Asn437. Lys453 lines the L-glutamate pocket.

Belongs to the tubulin--tyrosine ligase family. The cofactor is Mg(2+). Expressed in many sensory neurons in amphid.

It carries out the reaction L-glutamyl-[protein] + L-glutamate + ATP = gamma-L-glutamyl-L-glutamyl-[protein] + ADP + phosphate + H(+). In terms of biological role, monoglutamylase which modifies tubulin, adding a single glutamate on the gamma-carboxyl group of specific glutamate residues of target proteins. Involved in the side-chain initiation step of the polyglutamylation reaction but not in the elongation step. Preferentially modifies beta-tail tubulin over the alpha-tubulin. Involved in side-chain glutamylation of tubulin in sensory cilia. Together with ttll-5 and ttll-11, required for male mating. The protein is Tubulin polyglutamylase ttll-4 of Caenorhabditis elegans.